A 417-amino-acid chain; its full sequence is Phosphoribosylamine--glycine ligase (417 aa).

The region spanning 107–313 (KQIMAKYEIP…FLEIIEATLE (207 aa)) is the ATP-grasp domain. 133–194 (LKETWYPVVI…EEMLYGKEAS (62 aa)) serves as a coordination point for ATP. 2 residues coordinate Mg(2+): glutamate 283 and asparagine 285.

The protein belongs to the GARS family. The cofactor is Mg(2+). Requires Mn(2+) as cofactor.

The enzyme catalyses 5-phospho-beta-D-ribosylamine + glycine + ATP = N(1)-(5-phospho-beta-D-ribosyl)glycinamide + ADP + phosphate + H(+). Its pathway is purine metabolism; IMP biosynthesis via de novo pathway; N(1)-(5-phospho-D-ribosyl)glycinamide from 5-phospho-alpha-D-ribose 1-diphosphate: step 2/2. This is Phosphoribosylamine--glycine ligase from Caldanaerobacter subterraneus subsp. tengcongensis (strain DSM 15242 / JCM 11007 / NBRC 100824 / MB4) (Thermoanaerobacter tengcongensis).